A 369-amino-acid chain; its full sequence is D-glucosaminate-6-phosphate ammonia lyase (369 aa).

Position 213 is an N6-(pyridoxal phosphate)lysine (lysine 213).

The protein belongs to the SelA family. The cofactor is pyridoxal 5'-phosphate.

The catalysed reaction is 2-amino-2-deoxy-D-gluconate 6-phosphate = 2-dehydro-3-deoxy-6-phospho-D-gluconate + NH4(+). Involved in the catabolism of D-glucosaminate. Catalyzes the conversion of D-glucosaminate 6-phosphate to yield keto-3-deoxygluconate 6-phosphate (KDGP). The polypeptide is D-glucosaminate-6-phosphate ammonia lyase (Salmonella typhimurium (strain 14028s / SGSC 2262)).